The following is a 283-amino-acid chain: Bifunctional protein FolD (283 aa).

Residues 166 to 168 and Ser-191 contribute to the NADP(+) site; that span reads GRS.

The protein belongs to the tetrahydrofolate dehydrogenase/cyclohydrolase family. As to quaternary structure, homodimer.

The enzyme catalyses (6R)-5,10-methylene-5,6,7,8-tetrahydrofolate + NADP(+) = (6R)-5,10-methenyltetrahydrofolate + NADPH. It catalyses the reaction (6R)-5,10-methenyltetrahydrofolate + H2O = (6R)-10-formyltetrahydrofolate + H(+). Its pathway is one-carbon metabolism; tetrahydrofolate interconversion. Functionally, catalyzes the oxidation of 5,10-methylenetetrahydrofolate to 5,10-methenyltetrahydrofolate and then the hydrolysis of 5,10-methenyltetrahydrofolate to 10-formyltetrahydrofolate. In Pediococcus pentosaceus (strain ATCC 25745 / CCUG 21536 / LMG 10740 / 183-1w), this protein is Bifunctional protein FolD.